We begin with the raw amino-acid sequence, 405 residues long: Acetylornithine aminotransferase 1 (405 aa).

Residues 103–104 (GA) and Phe136 contribute to the pyridoxal 5'-phosphate site. Arg139 is a N(2)-acetyl-L-ornithine binding site. 221–224 (DEVQ) is a binding site for pyridoxal 5'-phosphate. Lys250 carries the N6-(pyridoxal phosphate)lysine modification. Ser278 serves as a coordination point for N(2)-acetyl-L-ornithine. Thr279 serves as a coordination point for pyridoxal 5'-phosphate.

It belongs to the class-III pyridoxal-phosphate-dependent aminotransferase family. ArgD subfamily. Homodimer. It depends on pyridoxal 5'-phosphate as a cofactor.

It localises to the cytoplasm. The catalysed reaction is N(2)-acetyl-L-ornithine + 2-oxoglutarate = N-acetyl-L-glutamate 5-semialdehyde + L-glutamate. The protein operates within amino-acid biosynthesis; L-arginine biosynthesis; N(2)-acetyl-L-ornithine from L-glutamate: step 4/4. This Bradyrhizobium diazoefficiens (strain JCM 10833 / BCRC 13528 / IAM 13628 / NBRC 14792 / USDA 110) protein is Acetylornithine aminotransferase 1.